The following is a 445-amino-acid chain: Trigger factor (445 aa).

A PPIase FKBP-type domain is found at 163–248 (GDTVVIDYVG…IHEVKVKELP (86 aa)). The segment at 425–445 (KEVESAKDDADKEASDAKADK) is disordered.

Belongs to the FKBP-type PPIase family. Tig subfamily.

It is found in the cytoplasm. It catalyses the reaction [protein]-peptidylproline (omega=180) = [protein]-peptidylproline (omega=0). Functionally, involved in protein export. Acts as a chaperone by maintaining the newly synthesized protein in an open conformation. Functions as a peptidyl-prolyl cis-trans isomerase. The sequence is that of Trigger factor from Lacticaseibacillus casei (strain BL23) (Lactobacillus casei).